The chain runs to 705 residues: Ion-translocating oxidoreductase complex subunit C (705 aa).

2 4Fe-4S ferredoxin-type domains span residues 368–397 (MGET…QQLY) and 407–435 (KATA…LVQY). 8 residues coordinate [4Fe-4S] cluster: Cys377, Cys380, Cys383, Cys387, Cys416, Cys419, Cys422, and Cys426. A disordered region spans residues 536-684 (RARQAENIPA…EPVDPRKAAV (149 aa)).

It belongs to the 4Fe4S bacterial-type ferredoxin family. RnfC subfamily. The complex is composed of six subunits: RnfA, RnfB, RnfC, RnfD, RnfE and RnfG. Requires [4Fe-4S] cluster as cofactor.

Its subcellular location is the cell inner membrane. In terms of biological role, part of a membrane-bound complex that couples electron transfer with translocation of ions across the membrane. The chain is Ion-translocating oxidoreductase complex subunit C from Citrobacter koseri (strain ATCC BAA-895 / CDC 4225-83 / SGSC4696).